The chain runs to 205 residues: Dephospho-CoA kinase (205 aa).

A DPCK domain is found at 6 to 205; sequence RIGLTGGIAA…EIYAGWCAGR (200 aa). 14-19 is an ATP binding site; the sequence is AAGKST.

Belongs to the CoaE family.

Its subcellular location is the cytoplasm. The catalysed reaction is 3'-dephospho-CoA + ATP = ADP + CoA + H(+). It participates in cofactor biosynthesis; coenzyme A biosynthesis; CoA from (R)-pantothenate: step 5/5. In terms of biological role, catalyzes the phosphorylation of the 3'-hydroxyl group of dephosphocoenzyme A to form coenzyme A. In Bifidobacterium longum (strain NCC 2705), this protein is Dephospho-CoA kinase.